The following is a 252-amino-acid chain: Imidazole glycerol phosphate synthase subunit HisF (252 aa).

Catalysis depends on residues Asp-11 and Asp-130.

The protein belongs to the HisA/HisF family. In terms of assembly, heterodimer of HisH and HisF.

The protein localises to the cytoplasm. It carries out the reaction 5-[(5-phospho-1-deoxy-D-ribulos-1-ylimino)methylamino]-1-(5-phospho-beta-D-ribosyl)imidazole-4-carboxamide + L-glutamine = D-erythro-1-(imidazol-4-yl)glycerol 3-phosphate + 5-amino-1-(5-phospho-beta-D-ribosyl)imidazole-4-carboxamide + L-glutamate + H(+). It participates in amino-acid biosynthesis; L-histidine biosynthesis; L-histidine from 5-phospho-alpha-D-ribose 1-diphosphate: step 5/9. In terms of biological role, IGPS catalyzes the conversion of PRFAR and glutamine to IGP, AICAR and glutamate. The HisF subunit catalyzes the cyclization activity that produces IGP and AICAR from PRFAR using the ammonia provided by the HisH subunit. This chain is Imidazole glycerol phosphate synthase subunit HisF, found in Desulforudis audaxviator (strain MP104C).